Reading from the N-terminus, the 732-residue chain is DNA ligase (732 aa).

Residues 47-51, 96-97, and Glu-133 each bind NAD(+); these read DAEYD and SI. Residue Lys-135 is the N6-AMP-lysine intermediate of the active site. 4 residues coordinate NAD(+): Arg-156, Glu-196, Lys-317, and Lys-341. Residues Cys-470, Cys-473, Cys-488, and Cys-494 each contribute to the Zn(2+) site. Residues 653 to 732 enclose the BRCT domain; sequence RATLPLAGKT…AGMLALLQGR (80 aa).

The protein belongs to the NAD-dependent DNA ligase family. LigA subfamily. Mg(2+) is required as a cofactor. Requires Mn(2+) as cofactor.

It carries out the reaction NAD(+) + (deoxyribonucleotide)n-3'-hydroxyl + 5'-phospho-(deoxyribonucleotide)m = (deoxyribonucleotide)n+m + AMP + beta-nicotinamide D-nucleotide.. Its function is as follows. DNA ligase that catalyzes the formation of phosphodiester linkages between 5'-phosphoryl and 3'-hydroxyl groups in double-stranded DNA using NAD as a coenzyme and as the energy source for the reaction. It is essential for DNA replication and repair of damaged DNA. The chain is DNA ligase from Paracidovorax citrulli (strain AAC00-1) (Acidovorax citrulli).